The chain runs to 152 residues: Probable flagellum biosynthesis repressor protein FlbT (152 aa).

Belongs to the FlbT family.

Functionally, has a post-transcriptional repressor function in flagellum biogenesis. Associates with the 5'-UTR of fljK mRNA and promotes its degradation. The polypeptide is Probable flagellum biosynthesis repressor protein FlbT (Brucella canis (strain ATCC 23365 / NCTC 10854 / RM-666)).